A 66-amino-acid polypeptide reads, in one-letter code: Large ribosomal subunit protein uL29 (66 aa).

It belongs to the universal ribosomal protein uL29 family.

This is Large ribosomal subunit protein uL29 from Petrotoga mobilis (strain DSM 10674 / SJ95).